The chain runs to 342 residues: Forkhead box protein D5-C (342 aa).

The tract at residues 1 to 89 (MNLSQDSSAH…KHSLDTTTNG (89 aa)) is disordered. Positions 20–34 (SDDEDEIDILGEDDP) are enriched in acidic residues. Residues 59–70 (SKLSCNESASHS) show a composition bias toward polar residues. Residues 71–83 (SGERERGTSKHSL) show a composition bias toward basic and acidic residues. Positions 97 to 191 (KPPYSYIALI…DNGSFLRRRK (95 aa)) form a DNA-binding region, fork-head.

In terms of tissue distribution, at the onset of gastrulation, expressed in the superficial layer of cells in the dorsal blastopore lip (Spemann organizer). In the open neural plate, expressed in a row of cells destined to become the floor plate of the neural tube. After neural tube closure, only detected in the tailtip and a small area located at the midbrain/hindbrain boundary.

The protein localises to the nucleus. Functionally, transcriptional repressor. This chain is Forkhead box protein D5-C (foxd5-c), found in Xenopus laevis (African clawed frog).